Here is a 231-residue protein sequence, read N- to C-terminus: MNGLVLGATGLCGGGFLRHAQEAPQFSKVYAILRRELPFPATDKVVAIVERDNSKWSQLITNEMNPQVLFTALATTRAAAGGLDKQYKIDHDLNLQLAQAAKEKGCETIVLVSSAGAHPDSRFGYMKMKGEIERDVIALDFKHIIILRPGPLLGERTNSKQSGFGGNLTAALGTRVYRSRFQRLLGYPVYGDEVGKVGVHLALNTSGKDKVQFVSSKDILDISASLEKIAT.

The transit peptide at 1-44 directs the protein to the mitochondrion; sequence MNGLVLGATGLCGGGFLRHAQEAPQFSKVYAILRRELPFPATDK.

The protein belongs to the FMP52 family.

Its subcellular location is the mitochondrion outer membrane. The protein is Protein FMP52, mitochondrial (FMP52) of Saccharomyces cerevisiae (strain ATCC 204508 / S288c) (Baker's yeast).